A 351-amino-acid chain; its full sequence is MLKNDLFLRALKRQPVPRTPIWVMRQAGRYLPEYRAIREKTDFLTLCKTPELAAEVTIQPVDIIGVDAAIIFSDILVVNEAMGMDVQIIETKGIKLTPPIRSQVDIDRLIIPDIEEKLGYVMDAIRLTKKELDNRVPLIGFSGAAWTLFTYAVEGGGSKNYAFAKKMMYREPQMAHMLLSKISQVITEYLLMQVEAGADALQIFDSWASALSEDDYREFALPYIKESVQAIKTKYPDIPVIVFSKDCNTILSDIADTGCDAMGLGWNMDIAKARKELQDRVCIQGNMDPTVLYGTHDKIKAEAAKILKQFGQHTAESGHVFNLGHGILPDVDPANLKCLVDFVKEESPKYH.

Residues 25-29 (RQAGR), Asp74, Tyr151, Ser206, and His325 each bind substrate.

The protein belongs to the uroporphyrinogen decarboxylase family. In terms of assembly, homodimer.

It localises to the cytoplasm. It catalyses the reaction uroporphyrinogen III + 4 H(+) = coproporphyrinogen III + 4 CO2. Its pathway is porphyrin-containing compound metabolism; protoporphyrin-IX biosynthesis; coproporphyrinogen-III from 5-aminolevulinate: step 4/4. In terms of biological role, catalyzes the decarboxylation of four acetate groups of uroporphyrinogen-III to yield coproporphyrinogen-III. The polypeptide is Uroporphyrinogen decarboxylase (Prosthecochloris aestuarii (strain DSM 271 / SK 413)).